Here is a 419-residue protein sequence, read N- to C-terminus: Tubby-like protein 4 (419 aa).

Residues 1–96 (MAATKREPLR…EREEEEEGSS (96 aa)) are disordered. Over residues 33–57 (AKEKEKENEVPTEIGRGKDGGEKKP) the composition is skewed to basic and acidic residues.

The protein belongs to the TUB family.

This is Tubby-like protein 4 (TULP4) from Oryza sativa subsp. japonica (Rice).